A 237-amino-acid chain; its full sequence is UPF0174 protein YaaW (237 aa).

It belongs to the UPF0174 family.

This Escherichia coli O157:H7 protein is UPF0174 protein YaaW.